Reading from the N-terminus, the 246-residue chain is Probable transcriptional regulatory protein RD1_2018 (246 aa).

This sequence belongs to the TACO1 family.

It localises to the cytoplasm. The chain is Probable transcriptional regulatory protein RD1_2018 from Roseobacter denitrificans (strain ATCC 33942 / OCh 114) (Erythrobacter sp. (strain OCh 114)).